The sequence spans 367 residues: Innexin inx2 (367 aa).

Residues 1-22 are Cytoplasmic-facing; sequence MFDVFGSVKGLLKIDQVCIDNN. A helical membrane pass occupies residues 23–43; sequence VFRMHYKATVIILIAFSLLVT. Over 44–109 the chain is Extracellular; that stretch reads SRQYIGDPID…EDEVKYHKYY (66 aa). A helical transmembrane segment spans residues 110–130; sequence QWVCFVLFFQAILFYVPRYLW. Residues 130–179 form an interaction with shg region; the sequence is WKSWEGGRLKMLVMDLNSPIVNDECKNDRKKILVDYFIGNLNRHNFYAFR. Residues 131–179 are Cytoplasmic-facing; sequence KSWEGGRLKMLVMDLNSPIVNDECKNDRKKILVDYFIGNLNRHNFYAFR. The helical transmembrane segment at 180–200 threads the bilayer; sequence FFVCEALNFVNVIGQIYFVDF. Residues 201-266 are Extracellular-facing; sequence FLDGEFSTYG…VLPLNIVNEK (66 aa). The chain crosses the membrane as a helical span at residues 267–287; sequence IYVFLWFWFIILSIMSGISLI. The Cytoplasmic portion of the chain corresponds to 288 to 367; sequence YRIAVVAGPK…HSAHKRPFDA (80 aa).

This sequence belongs to the pannexin family. In terms of assembly, monomer and heterooligomer with ogre or Inx3 (via cytoplasmic C-terminal region). Interacts (via cytoplasmic loop) with shg (via cytoplasmic region). Interacts with arm. As to expression, in ovary, expressed in inner germarial sheath cells, prefollicular cells, follicle cells, nurse cells and oocytes. Expressed in embryonic epithelial cells. Expressed in foregut and hindgut from stage 11-17, segmentally repeated tracheal placodes at stage 14, salivary gland at stage 16 and proventriculus at stage 16-17 (at protein level). During germband extension stage (stage 7), expressed in epidermal epithelial cells. Expressed in cephalic furrow. Repeating epidermal pattern emerges at stage 11, refines to one or two cells at each side of the segment borders by stage 13. Expressed in the imaginal wing disk. In pupae, expressed in the CNS and in primary, secondary and tertiary pigment cells of the retina. Expressed in optic lamina of the adult CNS.

Its subcellular location is the cell membrane. It is found in the cell junction. The protein resides in the gap junction. It localises to the cytoplasm. The protein localises to the apical cell membrane. Its subcellular location is the apicolateral cell membrane. It is found in the basolateral cell membrane. The protein resides in the lateral cell membrane. In terms of biological role, structural components of the gap junctions. Involved in gap junctional communication between germline and somatic cells which is essential for normal oogenesis. In embryonic epidermis, required for epithelial morphogenesis. Required for keyhole formation during early stages of proventriculus development in response to wg signaling. In follicle cells, promotes the formation of egg chambers in part through regulation of shg and baz at the boundary between germ cells and follicle cells. In inner germarial sheath cells, required for survival of early germ cells and for cyst formation. The sequence is that of Innexin inx2 (Inx2) from Drosophila melanogaster (Fruit fly).